Reading from the N-terminus, the 544-residue chain is Methionine--tRNA ligase (544 aa).

A 'HIGH' region motif is present at residues 10-20; it reads PYANGSLHLGH. Zn(2+) is bound by residues Cys-141, Cys-144, Cys-153, and Cys-156. Residues 329-333 carry the 'KMSKS' region motif; that stretch reads KLSTS. Thr-332 lines the ATP pocket.

This sequence belongs to the class-I aminoacyl-tRNA synthetase family. MetG type 1 subfamily. Monomer. Requires Zn(2+) as cofactor.

The protein resides in the cytoplasm. It catalyses the reaction tRNA(Met) + L-methionine + ATP = L-methionyl-tRNA(Met) + AMP + diphosphate. Is required not only for elongation of protein synthesis but also for the initiation of all mRNA translation through initiator tRNA(fMet) aminoacylation. This chain is Methionine--tRNA ligase, found in Bacillus cereus (strain Q1).